A 313-amino-acid chain; its full sequence is MSGIDPKRFGKVAVLFGGESAEREVSLTSGRLVLQGLRDAGIDAHPFDPAERPLSALKDEGFVRAFNALHGGYGENGQIQGALDFYGIRYTGSGVLGSALGLDKFRTKLVWQQTGVPTPPFETVMRGDDYAARATDIVAKLGLPLFVKPASEGSSVAVLKVKTADALPAALSEAATHDKIVIVEKSIEGGGEYTACIAGDLDLPLIKIVPAGEFYDYHAKYVANDTQYLIPCGLPAEQETELKRIARRAFDVLGCTDWGRADFMLDAAGNAYFLEVNTAPGMTDHSLPPKAARSIGIGYSELVVKVLSLTLND.

The ATP-grasp domain occupies 108-308 (KLVWQQTGVP…YSELVVKVLS (201 aa)). ATP is bound at residue 138 to 193 (VAKLGLPLFVKPASEGSSVAVLKVKTADALPAALSEAATHDKIVIVEKSIEGGGEY). The Mg(2+) site is built by Asp-262, Glu-275, and Asn-277.

It belongs to the D-alanine--D-alanine ligase family. Mg(2+) is required as a cofactor. Mn(2+) serves as cofactor.

Its subcellular location is the cytoplasm. It carries out the reaction 2 D-alanine + ATP = D-alanyl-D-alanine + ADP + phosphate + H(+). It functions in the pathway cell wall biogenesis; peptidoglycan biosynthesis. In terms of biological role, cell wall formation. This Burkholderia ambifaria (strain MC40-6) protein is D-alanine--D-alanine ligase.